Consider the following 242-residue polypeptide: Putative ABC transporter ATP-binding protein TTE0246 (242 aa).

Residues 5–242 (FELKNVSYFY…EKLLLKANLI (238 aa)) enclose the ABC transporter domain. ATP is bound at residue 38 to 45 (GANGSGKS).

It belongs to the ABC transporter superfamily.

The protein localises to the cell membrane. Probably part of an ABC transporter complex. Responsible for energy coupling to the transport system. The chain is Putative ABC transporter ATP-binding protein TTE0246 from Caldanaerobacter subterraneus subsp. tengcongensis (strain DSM 15242 / JCM 11007 / NBRC 100824 / MB4) (Thermoanaerobacter tengcongensis).